The primary structure comprises 95 residues: MTQKEKNETCIHATVSGKVQGVFFRESVRKKAEELQLTGWVKNLSHGDVELVACGERDSIMILTEWLWEGPPQAAVSNVNWEEIVVEDYSDFRVR.

One can recognise an Acylphosphatase-like domain in the interval 10–95 (CIHATVSGKV…VEDYSDFRVR (86 aa)). Active-site residues include R25 and N43.

It belongs to the acylphosphatase family.

It carries out the reaction an acyl phosphate + H2O = a carboxylate + phosphate + H(+). The protein is Acylphosphatase (acyP) of Coxiella burnetii (strain Dugway 5J108-111).